Reading from the N-terminus, the 317-residue chain is Acetyl-coenzyme A carboxylase carboxyl transferase subunit alpha (317 aa).

The CoA carboxyltransferase C-terminal domain occupies Lys-41–Asp-291.

This sequence belongs to the AccA family. In terms of assembly, acetyl-CoA carboxylase is a heterohexamer composed of biotin carboxyl carrier protein (AccB), biotin carboxylase (AccC) and two subunits each of ACCase subunit alpha (AccA) and ACCase subunit beta (AccD).

The protein localises to the cytoplasm. The enzyme catalyses N(6)-carboxybiotinyl-L-lysyl-[protein] + acetyl-CoA = N(6)-biotinyl-L-lysyl-[protein] + malonyl-CoA. It participates in lipid metabolism; malonyl-CoA biosynthesis; malonyl-CoA from acetyl-CoA: step 1/1. Functionally, component of the acetyl coenzyme A carboxylase (ACC) complex. First, biotin carboxylase catalyzes the carboxylation of biotin on its carrier protein (BCCP) and then the CO(2) group is transferred by the carboxyltransferase to acetyl-CoA to form malonyl-CoA. The chain is Acetyl-coenzyme A carboxylase carboxyl transferase subunit alpha from Paramagnetospirillum magneticum (strain ATCC 700264 / AMB-1) (Magnetospirillum magneticum).